A 117-amino-acid chain; its full sequence is Large ribosomal subunit protein uL22c (117 aa).

It belongs to the universal ribosomal protein uL22 family. In terms of assembly, part of the 50S ribosomal subunit.

Its subcellular location is the plastid. The protein localises to the chloroplast. In terms of biological role, this protein binds specifically to 23S rRNA. Functionally, the globular domain of the protein is located near the polypeptide exit tunnel on the outside of the subunit, while an extended beta-hairpin is found that lines the wall of the exit tunnel in the center of the 70S ribosome. In Pyropia yezoensis (Susabi-nori), this protein is Large ribosomal subunit protein uL22c (rpl22).